The primary structure comprises 1416 residues: DNA-directed RNA polymerase subunit beta (1416 aa).

A disordered region spans residues 1388-1416 (AKAAREQAEGELGGPLGTPRGAAAEKNTA).

The protein belongs to the RNA polymerase beta chain family. The RNAP catalytic core consists of 2 alpha, 1 beta, 1 beta' and 1 omega subunit. When a sigma factor is associated with the core the holoenzyme is formed, which can initiate transcription.

It carries out the reaction RNA(n) + a ribonucleoside 5'-triphosphate = RNA(n+1) + diphosphate. In terms of biological role, DNA-dependent RNA polymerase catalyzes the transcription of DNA into RNA using the four ribonucleoside triphosphates as substrates. The chain is DNA-directed RNA polymerase subunit beta from Anaeromyxobacter sp. (strain Fw109-5).